The chain runs to 111 residues: Ribosome-binding factor A (111 aa).

It belongs to the RbfA family. In terms of assembly, monomer. Binds 30S ribosomal subunits, but not 50S ribosomal subunits or 70S ribosomes.

Its subcellular location is the cytoplasm. Functionally, one of several proteins that assist in the late maturation steps of the functional core of the 30S ribosomal subunit. Associates with free 30S ribosomal subunits (but not with 30S subunits that are part of 70S ribosomes or polysomes). Required for efficient processing of 16S rRNA. May interact with the 5'-terminal helix region of 16S rRNA. The sequence is that of Ribosome-binding factor A from Helicobacter pylori (strain J99 / ATCC 700824) (Campylobacter pylori J99).